Consider the following 942-residue polypeptide: Sucrose synthase 6 (942 aa).

Residues Thr281–Thr759 form a GT-B glycosyltransferase region. Residues Thr830–Lys862 are disordered. Residues Lys838 to Lys862 are compositionally biased toward basic and acidic residues.

Belongs to the glycosyltransferase 1 family. Plant sucrose synthase subfamily. In terms of tissue distribution, detected in the whole plant but more precisely confined to the vasculature in cotyledons, leaves, petals, anthers and roots.

It is found in the secreted. Its subcellular location is the cell wall. It carries out the reaction an NDP-alpha-D-glucose + D-fructose = a ribonucleoside 5'-diphosphate + sucrose + H(+). Its function is as follows. Sucrose-cleaving enzyme that provides UDP-glucose and fructose for various metabolic pathways. Functions in callose synthesis at the site of phloem sieve elements. The polypeptide is Sucrose synthase 6 (SUS6) (Arabidopsis thaliana (Mouse-ear cress)).